A 343-amino-acid chain; its full sequence is S-adenosylmethionine:tRNA ribosyltransferase-isomerase (343 aa).

It belongs to the QueA family. Monomer.

Its subcellular location is the cytoplasm. It catalyses the reaction 7-aminomethyl-7-carbaguanosine(34) in tRNA + S-adenosyl-L-methionine = epoxyqueuosine(34) in tRNA + adenine + L-methionine + 2 H(+). The protein operates within tRNA modification; tRNA-queuosine biosynthesis. In terms of biological role, transfers and isomerizes the ribose moiety from AdoMet to the 7-aminomethyl group of 7-deazaguanine (preQ1-tRNA) to give epoxyqueuosine (oQ-tRNA). This chain is S-adenosylmethionine:tRNA ribosyltransferase-isomerase, found in Geotalea uraniireducens (strain Rf4) (Geobacter uraniireducens).